A 570-amino-acid chain; its full sequence is Urease subunit alpha (570 aa).

A Urease domain is found at 131 to 570; the sequence is GGMDSHIHFI…LPMAQRYFLF (440 aa). Ni(2+) contacts are provided by His-136, His-138, and Lys-219. Position 219 is an N6-carboxylysine (Lys-219). Residue His-221 coordinates substrate. 2 residues coordinate Ni(2+): His-248 and His-274. His-322 functions as the Proton donor in the catalytic mechanism. Asp-362 provides a ligand contact to Ni(2+).

The protein belongs to the metallo-dependent hydrolases superfamily. Urease alpha subunit family. As to quaternary structure, heterotrimer of UreA (gamma), UreB (beta) and UreC (alpha) subunits. Three heterotrimers associate to form the active enzyme. Ni cation is required as a cofactor. Carboxylation allows a single lysine to coordinate two nickel ions.

Its subcellular location is the cytoplasm. It carries out the reaction urea + 2 H2O + H(+) = hydrogencarbonate + 2 NH4(+). The protein operates within nitrogen metabolism; urea degradation; CO(2) and NH(3) from urea (urease route): step 1/1. The sequence is that of Urease subunit alpha from Sinorhizobium fredii (strain NBRC 101917 / NGR234).